The sequence spans 217 residues: UPF0711 protein C18orf21 homolog (217 aa).

Ser-126 carries the phosphoserine modification. Phosphothreonine is present on residues Thr-130 and Thr-139. Residues 131 to 190 form a disordered region; sequence AANKASPKTPKRTAPGSANLGQSTNGSKGKSPSLTIRTPTSGQSTPICSSRNGSKRKKHF. Residues 149 to 182 show a composition bias toward polar residues; the sequence is NLGQSTNGSKGKSPSLTIRTPTSGQSTPICSSRN.

Belongs to the UPF0711 family.

The sequence is that of UPF0711 protein C18orf21 homolog from Mus musculus (Mouse).